Consider the following 1377-residue polypeptide: Dicer-like protein 2 (1377 aa).

The Helicase ATP-binding domain maps to 23 to 203 (MFEASLQENI…LSMIESNMNA (181 aa)). Residue 36–43 (MDTGSGKT) coordinates ATP. Residues 144 to 147 (DEAH) carry the DEAH box motif. In terms of domain architecture, Helicase C-terminal spans 367–544 (KLEALISFLS…ALALETMAEV (178 aa)). The Dicer dsRNA-binding fold domain maps to 563–657 (AVARLHHFCS…LPLTRKPELR (95 aa)). 2 consecutive RNase III domains span residues 916 to 1056 (ATRL…MDGG) and 1090 to 1274 (NDSL…VDSR). Mg(2+) contacts are provided by glutamate 1129, aspartate 1260, and glutamate 1263.

The protein belongs to the helicase family. Dicer subfamily. It depends on Mg(2+) as a cofactor. Mn(2+) serves as cofactor.

Functionally, dicer-like endonuclease involved in cleaving double-stranded RNA in the RNA interference (RNAi) pathway. Produces 21 to 25 bp dsRNAs (siRNAs) which target the selective destruction of homologous RNAs leading to sequence-specific suppression of gene expression, called post-transcriptional gene silencing (PTGS). Part of a broad host defense response against viral infection and transposons. The chain is Dicer-like protein 2 (dcl2) from Aspergillus terreus (strain NIH 2624 / FGSC A1156).